The following is a 195-amino-acid chain: Holliday junction branch migration complex subunit RuvA (195 aa).

The domain I stretch occupies residues 1-62 (MIEFVKGPVA…EDQQTLYGFR (62 aa)). Residues 63-141 (SRRERELFNK…ELAPDYVPNE (79 aa)) are domain II. Residues 141–145 (EGLFA) are flexible linker. Residues 146–195 (QGASELDEACEALVALGYSEREIAKVRKALSGEILTTDAYIKRALQLLLK) are domain III.

The protein belongs to the RuvA family. Homotetramer. Forms an RuvA(8)-RuvB(12)-Holliday junction (HJ) complex. HJ DNA is sandwiched between 2 RuvA tetramers; dsDNA enters through RuvA and exits via RuvB. An RuvB hexamer assembles on each DNA strand where it exits the tetramer. Each RuvB hexamer is contacted by two RuvA subunits (via domain III) on 2 adjacent RuvB subunits; this complex drives branch migration. In the full resolvosome a probable DNA-RuvA(4)-RuvB(12)-RuvC(2) complex forms which resolves the HJ.

Its subcellular location is the cytoplasm. Functionally, the RuvA-RuvB-RuvC complex processes Holliday junction (HJ) DNA during genetic recombination and DNA repair, while the RuvA-RuvB complex plays an important role in the rescue of blocked DNA replication forks via replication fork reversal (RFR). RuvA specifically binds to HJ cruciform DNA, conferring on it an open structure. The RuvB hexamer acts as an ATP-dependent pump, pulling dsDNA into and through the RuvAB complex. HJ branch migration allows RuvC to scan DNA until it finds its consensus sequence, where it cleaves and resolves the cruciform DNA. This Exiguobacterium sp. (strain ATCC BAA-1283 / AT1b) protein is Holliday junction branch migration complex subunit RuvA.